The primary structure comprises 581 residues: Arginine--tRNA ligase (581 aa).

Residues 122–132 carry the 'HIGH' region motif; the sequence is PNVAKPMHVGH.

It belongs to the class-I aminoacyl-tRNA synthetase family. In terms of assembly, monomer.

It localises to the cytoplasm. The enzyme catalyses tRNA(Arg) + L-arginine + ATP = L-arginyl-tRNA(Arg) + AMP + diphosphate. The polypeptide is Arginine--tRNA ligase (Francisella tularensis subsp. tularensis (strain FSC 198)).